Here is a 62-residue protein sequence, read N- to C-terminus: MARRCFVTGKSAKAGNARSHSMRATRRTWGVNVQKVRILVNGKPKRVYVSTRALKSGLVTRV.

The segment at 1-23 (MARRCFVTGKSAKAGNARSHSMR) is disordered.

The protein belongs to the bacterial ribosomal protein bL28 family.

This is Large ribosomal subunit protein bL28 from Brevibacillus brevis (strain 47 / JCM 6285 / NBRC 100599).